The following is a 343-amino-acid chain: tRNA N6-adenosine threonylcarbamoyltransferase (343 aa).

Histidine 111 and histidine 115 together coordinate Fe cation. Residues 134-138, aspartate 167, glycine 180, and asparagine 276 contribute to the substrate site; that span reads LVSGG. Aspartate 304 is a binding site for Fe cation.

Belongs to the KAE1 / TsaD family. Fe(2+) is required as a cofactor.

It is found in the cytoplasm. It catalyses the reaction L-threonylcarbamoyladenylate + adenosine(37) in tRNA = N(6)-L-threonylcarbamoyladenosine(37) in tRNA + AMP + H(+). Functionally, required for the formation of a threonylcarbamoyl group on adenosine at position 37 (t(6)A37) in tRNAs that read codons beginning with adenine. Is involved in the transfer of the threonylcarbamoyl moiety of threonylcarbamoyl-AMP (TC-AMP) to the N6 group of A37, together with TsaE and TsaB. TsaD likely plays a direct catalytic role in this reaction. The sequence is that of tRNA N6-adenosine threonylcarbamoyltransferase from Chromohalobacter salexigens (strain ATCC BAA-138 / DSM 3043 / CIP 106854 / NCIMB 13768 / 1H11).